We begin with the raw amino-acid sequence, 370 residues long: Acyl-CoA:lysophosphatidylglycerol acyltransferase 1 (370 aa).

A helical membrane pass occupies residues 22–42 (FAFMVANNLVAIPSYICYVII). The HXXXXD motif signature appears at 101–106 (HQATGD). A helical transmembrane segment spans residues 342–362 (MWIFLIQSFAFLSGYLWYHII).

It belongs to the 1-acyl-sn-glycerol-3-phosphate acyltransferase family. As to expression, ubiquitous. Expressed in heart, kidney, liver, skin, intestine, and thymus. Highest expression is detected in brain and testis.

Its subcellular location is the endoplasmic reticulum membrane. The enzyme catalyses a 2-acyl-sn-glycero-3-phosphoethanolamine + octadecanoyl-CoA = 1-octadecanoyl-2-acyl-sn-glycero-3-phosphoethanolamine + CoA. The catalysed reaction is 2-(9Z-octadecenoyl)-sn-glycero-3-phosphoethanolamine + octadecanoyl-CoA = 1-octadecanoyl-2-(9Z-octadecenoyl)-sn-glycero-3-phosphoethanolamine + CoA. It carries out the reaction a 2-acyl-sn-glycero-3-phosphoethanolamine + hexadecanoyl-CoA = 1-hexadecanoyl-2-acyl-sn-glycero-3-phosphoethanolamine + CoA. It catalyses the reaction 2-(9Z-octadecenoyl)-sn-glycero-3-phosphoethanolamine + hexadecanoyl-CoA = 1-hexadecanoyl-2-(9Z-octadecenoyl)-sn-glycero-3-phosphoethanolamine + CoA. The enzyme catalyses 1-tetradecanoyl-sn-glycero-3-phospho-(1'-sn-glycerol) + hexadecanoyl-CoA = 1-tetradecanoyl-2-hexadecanoyl-sn-glycero-3-phospho-(1'-sn-glycerol) + CoA. The catalysed reaction is 1-hexadecanoyl-sn-glycero-3-phospho-(1'-sn-glycerol) + dodecanoyl-CoA = 1-hexadecanoyl-2-dodecanoyl-sn-glycero-3-phospho-(1'-sn-glycerol) + CoA. It carries out the reaction 1-hexadecanoyl-sn-glycero-3-phospho-(1'-sn-glycerol) + hexadecanoyl-CoA = 1,2-dihexadecanoyl-sn-glycero-3-phospho-(1'-sn-glycerol) + CoA. It catalyses the reaction 1-hexadecanoyl-sn-glycero-3-phospho-(1'-sn-glycerol) + octadecanoyl-CoA = 1-hexadecanoyl-2-octadecanoyl-sn-glycero-3-phospho-(1'-sn-glycerol) + CoA. The enzyme catalyses 1-octadecanoyl-sn-glycero-3-phospho-(1'-sn-glycerol) + hexadecanoyl-CoA = 1-octadecanoyl-2-hexadecanoyl-sn-glycero-3-phospho-(1'-sn-glycerol) + CoA. The catalysed reaction is 1-(9Z-octadecenoyl)-sn-glycero-3-phospho-(1'-sn-glycerol) + dodecanoyl-CoA = 1-(9Z-octadecenoyl)-2-dodecanoyl-sn-glycero-3-phospho-(1'-sn-glycerol) + CoA. It carries out the reaction 1-hexadecanoyl-sn-glycero-3-phospho-(1'-sn-glycerol) + (9Z)-octadecenoyl-CoA = 1-hexadecanoyl-2-(9Z-octadecenoyl)-sn-glycero-3-phospho-(1'-sn-glycerol) + CoA. It catalyses the reaction 1-(9Z-octadecenoyl)-sn-glycero-3-phospho-(1'-sn-glycerol) + hexadecanoyl-CoA = 1-(9Z-octadecenoyl)-2-hexadecanoyl-sn-glycero-3-phospho-(1'-sn-glycerol) + CoA. The enzyme catalyses 1-(9Z-octadecenoyl)-sn-glycero-3-phospho-(1'-sn-glycerol) + (9Z)-octadecenoyl-CoA = 1,2-di-(9Z-octadecenoyl)-sn-glycero-3-phospho-(1'-sn-glycerol) + CoA. The catalysed reaction is a 2-acylglycerol + an acyl-CoA = a 1,2-diacylglycerol + CoA. It carries out the reaction a 2-acylglycerol + hexadecanoyl-CoA = a 1-hexadecanoyl-2-acylglycerol + CoA. It catalyses the reaction a 1-acylglycerol + hexadecanoyl-CoA = an hexadecanoyl-acylglycerol + CoA. The enzyme catalyses a 2-acyl-sn-glycero-3-phosphocholine + an acyl-CoA = a 1,2-diacyl-sn-glycero-3-phosphocholine + CoA. The catalysed reaction is 2-(9Z-octadecenoyl)-sn-glycero-3-phosphocholine + octadecanoyl-CoA = 1-octadecanoyl-2-(9Z-octadecenoyl)-sn-glycero-3-phosphocholine + CoA. It carries out the reaction 2-(9Z,12Z-octadecadienoyl)-sn-glycero-3-phosphocholine + octadecanoyl-CoA = 1-octadecanoyl-2-(9Z,12Z)-octadecadienoyl-sn-glycero-3-phosphocholine + CoA. It catalyses the reaction 2-(5Z,8Z,11Z,14Z)-eicosatetraenoyl-sn-glycero-3-phosphocholine + octadecanoyl-CoA = 1-octadecanoyl-2-(5Z,8Z,11Z,14Z-eicosatetraenoyl)-sn-glycero-3-phosphocholine + CoA. The enzyme catalyses 2-(9Z-octadecenoyl)-sn-glycero-3-phosphocholine + hexadecanoyl-CoA = 1-hexadecanoyl-2-(9Z-octadecenoyl)-sn-glycero-3-phosphocholine + CoA. The catalysed reaction is 2-(9Z-octadecenoyl)-sn-glycero-3-phospho-L-serine + hexadecanoyl-CoA = 1-hexadecanoyl-2-(9Z-octadecenoyl)-sn-glycero-3-phospho-L-serine + CoA. It carries out the reaction 2-(4Z,7Z,10Z,13Z,16Z,19Z-docosahexaenoyl)-sn-glycero-3-phosphocholine + octadecanoyl-CoA = 1-octadecanoyl-2-(4Z,7Z,10Z,13Z,16Z,19Z-docosahexaenoyl)-sn-glycero-3-phosphocholine + CoA. It catalyses the reaction 1-(9Z-octadecenoyl)-sn-glycero-3-phospho-L-serine + octadecanoyl-CoA = 1-(9Z-octadecenoyl)-2-octadecanoyl-sn-glycero-3-phospho-L-serine + CoA. The enzyme catalyses a 2-acyl-sn-glycero-3-phosphoethanolamine + a fatty acyl-CoA = a 1,2-diacyl-sn-glycero-3-phosphoethanolamine + CoA. Lysophospholipid acyltransferase involved in fatty acyl chain remodeling of glycerophospholipids in the endoplasmic reticulum membrane. Selectively catalyzes the transfer and esterification of saturated long-chain fatty acids from acyl-CoA to the sn-1 position of 1-lyso-2-acyl phosphatidylethanolamines (1-lyso-PE, LPE), with a preference for stearoyl CoA over palmitoyl CoA as acyl donor. Acts in concert with an unknown phospholipase A1 to convert palmitate PE species into stearate ones. Provides substrates to the PE methylation pathway, controlling stearate/palmitate composition of PE and phosphatidylcholine (PC) species with an overall impact on de novo hepatic lipid synthesis, body fat content and life span. Can acylate lysophosphatidylglycerols (LPG) using various saturated fatty acyl-CoAs as acyl donors. Can also acylate monoacylglycerols with a preference for 2-monoacylglycerols over 1-monoacylglycerols. Has no activity toward lysophosphatidic acids (LPA) and lysophosphatidylcholines (LPC). This Mus musculus (Mouse) protein is Acyl-CoA:lysophosphatidylglycerol acyltransferase 1.